We begin with the raw amino-acid sequence, 276 residues long: uncharacterized protein (276 aa).

Residues 20–137 form the AB hydrolase-1 domain; it reads PVLIFIPGAN…PPINTFLPDS (118 aa). The interval 57 to 76 is disordered; that stretch reads GESELTEPLPDSASNPDSDY.

The protein belongs to the AB hydrolase superfamily.

This is an uncharacterized protein from Staphylococcus aureus (strain COL).